Reading from the N-terminus, the 305-residue chain is N-acetylneuraminate lyase A (305 aa).

The aceneuramate site is built by Thr51 and Thr52. Tyr143 acts as the Proton donor in catalysis. Lys173 functions as the Schiff-base intermediate with substrate in the catalytic mechanism. 5 residues coordinate aceneuramate: Ser175, Gly197, Asp199, Glu200, and Ser216.

Belongs to the DapA family. NanA subfamily. In terms of assembly, homotetramer.

The protein resides in the cytoplasm. It carries out the reaction aceneuramate = aldehydo-N-acetyl-D-mannosamine + pyruvate. The protein operates within amino-sugar metabolism; N-acetylneuraminate degradation. In terms of biological role, catalyzes the cleavage of N-acetylneuraminic acid (sialic acid) to form pyruvate and N-acetylmannosamine via a Schiff base intermediate. It prevents sialic acids from being recycled and returning to the cell surface. Involved in the N-glycolylneuraminic acid (Neu5Gc) degradation pathway. This is N-acetylneuraminate lyase A (npl-a) from Xenopus laevis (African clawed frog).